The sequence spans 323 residues: DNA repair and recombination protein RadA (323 aa).

An ATP-binding site is contributed by 115 to 122 (GEFGSGKT).

This sequence belongs to the eukaryotic RecA-like protein family.

Functionally, involved in DNA repair and in homologous recombination. Binds and assemble on single-stranded DNA to form a nucleoprotein filament. Hydrolyzes ATP in a ssDNA-dependent manner and promotes DNA strand exchange between homologous DNA molecules. This chain is DNA repair and recombination protein RadA, found in Thermoplasma volcanium (strain ATCC 51530 / DSM 4299 / JCM 9571 / NBRC 15438 / GSS1).